The sequence spans 609 residues: UvrABC system protein C (609 aa).

A GIY-YIG domain is found at 16–94 (SSPGVYRMYD…IKQYMPRYNV (79 aa)). The region spanning 203 to 238 (LQVMTELVSKMEASALALEYEQAASYRDQIAALRRV) is the UVR domain.

This sequence belongs to the UvrC family. In terms of assembly, interacts with UvrB in an incision complex.

It localises to the cytoplasm. In terms of biological role, the UvrABC repair system catalyzes the recognition and processing of DNA lesions. UvrC both incises the 5' and 3' sides of the lesion. The N-terminal half is responsible for the 3' incision and the C-terminal half is responsible for the 5' incision. This chain is UvrABC system protein C, found in Shewanella sediminis (strain HAW-EB3).